A 154-amino-acid polypeptide reads, in one-letter code: Crossover junction endodeoxyribonuclease RuvC (154 aa).

Active-site residues include aspartate 7, glutamate 67, and aspartate 139. Mg(2+)-binding residues include aspartate 7, glutamate 67, and aspartate 139.

It belongs to the RuvC family. As to quaternary structure, homodimer which binds Holliday junction (HJ) DNA. The HJ becomes 2-fold symmetrical on binding to RuvC with unstacked arms; it has a different conformation from HJ DNA in complex with RuvA. In the full resolvosome a probable DNA-RuvA(4)-RuvB(12)-RuvC(2) complex forms which resolves the HJ. Mg(2+) serves as cofactor.

It is found in the cytoplasm. It carries out the reaction Endonucleolytic cleavage at a junction such as a reciprocal single-stranded crossover between two homologous DNA duplexes (Holliday junction).. Its function is as follows. The RuvA-RuvB-RuvC complex processes Holliday junction (HJ) DNA during genetic recombination and DNA repair. Endonuclease that resolves HJ intermediates. Cleaves cruciform DNA by making single-stranded nicks across the HJ at symmetrical positions within the homologous arms, yielding a 5'-phosphate and a 3'-hydroxyl group; requires a central core of homology in the junction. The consensus cleavage sequence is 5'-(A/T)TT(C/G)-3'. Cleavage occurs on the 3'-side of the TT dinucleotide at the point of strand exchange. HJ branch migration catalyzed by RuvA-RuvB allows RuvC to scan DNA until it finds its consensus sequence, where it cleaves and resolves the cruciform DNA. This chain is Crossover junction endodeoxyribonuclease RuvC, found in Prochlorococcus marinus (strain MIT 9313).